We begin with the raw amino-acid sequence, 1061 residues long: Atrial natriuretic peptide receptor 1 (1061 aa).

The N-terminal stretch at 1 to 32 (MPGPRRPAGSRLRLLLLLLLPPLLLLLRGSHA) is a signal peptide. The Extracellular portion of the chain corresponds to 33–473 (GNLTVAVVLP…CNQDHLSTLE (441 aa)). 2 N-linked (GlcNAc...) asparagine glycosylation sites follow: asparagine 34 and asparagine 45. Chloride contacts are provided by serine 85, glycine 117, and cysteine 118. 2 cysteine pairs are disulfide-bonded: cysteine 92–cysteine 118 and cysteine 196–cysteine 245. Asparagine 212, asparagine 338, asparagine 379, asparagine 386, and asparagine 427 each carry an N-linked (GlcNAc...) asparagine glycan. Residues cysteine 455 and cysteine 464 are joined by a disulfide bond. Residues 474–494 (VLALVGSLSLLGILIVSFFIY) form a helical membrane-spanning segment. Residues 495–1061 (RKMQLEKELA…LGERGSSTRG (567 aa)) lie on the Cytoplasmic side of the membrane. Phosphoserine is present on residues serine 519 and serine 529. A Protein kinase domain is found at 528 to 805 (GSRLTLSGRG…QIRLTLRKFN (278 aa)). At threonine 532 the chain carries Phosphothreonine. Residues serine 534, serine 538, and serine 542 each carry the phosphoserine modification. At threonine 545 the chain carries Phosphothreonine. Residues 876-1006 (TIYFSDIVGF…DTVNTASRME (131 aa)) form the Guanylate cyclase domain.

Belongs to the adenylyl cyclase class-4/guanylyl cyclase family. Homodimer. Post-translationally, phosphorylation of the protein kinase-like domain is required for full activation by ANP.

The protein localises to the membrane. It catalyses the reaction GTP = 3',5'-cyclic GMP + diphosphate. Functionally, receptor for the atrial natriuretic peptide NPPA/ANP and the brain natriuretic peptide NPPB/BNP which are potent vasoactive hormones playing a key role in cardiovascular homeostasis. Plays an essential role in the regulation of endothelial cell senescence and vascular aging. Upon activation by ANP or BNP, stimulates the production of cyclic guanosine monophosphate (cGMP) that promotes vascular tone and volume homeostasis by activation of protein kinase cGMP-dependent 1/PRKG1 and subsequently PRKAA1, thereby controlling blood pressure and maintaining cardiovascular homeostasis. The polypeptide is Atrial natriuretic peptide receptor 1 (Homo sapiens (Human)).